The sequence spans 744 residues: Glucosamine inositolphosphorylceramide transferase 1 (744 aa).

The next 3 helical transmembrane spans lie at 31-51, 378-398, and 460-480; these read FLVA…WLVV, SLFG…VGFV, and LFFC…VHFL. Substrate contacts are provided by residues N534, 558–563, 579–581, R609, and 665–669; these read NSLNNR, DDD, and FNCED. D581 serves as a coordination point for Mn(2+). C667 and C718 are joined by a disulfide. D669 is an active-site residue.

The protein belongs to the glycosyltransferase 64 family. It depends on Mn(2+) as a cofactor. As to expression, highly expressed in almost all tissues.

The protein resides in the membrane. It functions in the pathway sphingolipid metabolism. Its function is as follows. Essential protein. Glycosyltransferase that mediates the glycosylation of glycosylinositol phosphorylceramides (GIPCs), the major sphingolipids in the plasma membrane; acts as a HexN(Ac)-specific GIPC sugar transferase. Responsible for the glycosylation of a subgroup of GIPCs found in seeds and pollen that contain GlcNAc and GlcN (GlcN(Ac)). Maybe involved in the maintenance of cell-cell adhesion. In Oryza sativa subsp. japonica (Rice), this protein is Glucosamine inositolphosphorylceramide transferase 1.